We begin with the raw amino-acid sequence, 214 residues long: MRVRYKPWAEDYLKEHPNLVDMDGAHAGKMSEWFDKEQPIYIEIGSGMGQFITTLASKFPEINFVSMEREKSVMYKVLDKVKELNLTNLKMICNDAIELNEYFNDGEISRIYLNFSDPWPKKRHAKRRLTYHTFLALYQQILKEDGEIHFKTDNRGLFAFSLESMSQYGMYFTKLNLNLHDEDDEDNILTEYEKKFSEKGSRIYRMEAKFHKSI.

S-adenosyl-L-methionine contacts are provided by E43, E68, D95, and D117. D117 is an active-site residue. Substrate contacts are provided by residues K121, D153, and 190-193 (TEYE).

This sequence belongs to the class I-like SAM-binding methyltransferase superfamily. TrmB family.

It carries out the reaction guanosine(46) in tRNA + S-adenosyl-L-methionine = N(7)-methylguanosine(46) in tRNA + S-adenosyl-L-homocysteine. Its pathway is tRNA modification; N(7)-methylguanine-tRNA biosynthesis. Functionally, catalyzes the formation of N(7)-methylguanine at position 46 (m7G46) in tRNA. This Staphylococcus haemolyticus (strain JCSC1435) protein is tRNA (guanine-N(7)-)-methyltransferase.